The primary structure comprises 471 residues: Putative multidrug resistance protein MdtD (471 aa).

Over 1 to 11 (MTDLPDSTRWQ) the chain is Periplasmic. A helical membrane pass occupies residues 12–32 (LWIVAFGFFMQSLDTTIVNTA). Over 33-48 (LPSMAQSLGESPLHMH) the chain is Cytoplasmic. The helical transmembrane segment at 49–69 (MVIVSYVLTVAVMLPASGWLA) threads the bilayer. The Periplasmic portion of the chain corresponds to 70-76 (DKVGVRN). Residues 77 to 97 (IFFTAIVLFTLGSLFCALSGT) form a helical membrane-spanning segment. The Cytoplasmic segment spans residues 98 to 101 (LNEL). A helical membrane pass occupies residues 102–124 (LLARALQGVGGAMMVPVGRLTVM). Residues 125 to 137 (KIVPREQYMAAMT) are Periplasmic-facing. The chain crosses the membrane as a helical span at residues 138–158 (FVTLPGQVGPLLGPALGGLLV). Over 159 to 164 (EYASWH) the chain is Cytoplasmic. Residues 165–185 (WIFLINIPVGIIGAIATLMLM) form a helical membrane-spanning segment. The Periplasmic portion of the chain corresponds to 186–196 (PNYTMQTRRFD). A helical transmembrane segment spans residues 197–217 (LSGFLLLAVGMAVLTLALDGS). Over 218-224 (KGTGFSP) the chain is Cytoplasmic. The chain crosses the membrane as a helical span at residues 225-245 (LAIAGLVAVGVVALVLYLLHA). Over 246–262 (QNNNRALFSLKLFRTRT) the chain is Periplasmic. A helical membrane pass occupies residues 263–283 (FSLGLAGSFAGRIGSGMLPFM). Topologically, residues 284-285 (TP) are cytoplasmic. A helical membrane pass occupies residues 286–306 (VFLQIGLGFSPFHAGLMMIPM). The Periplasmic segment spans residues 307-341 (VLGSMGMKRIVVQVVNRFGYRRVLVATTLGLSLVT). The helical transmembrane segment at 342–362 (LLFMTTALLGWYYVLPFVLFL) threads the bilayer. At 363 to 395 (QGMVNSTRFSSMNTLTLKDLPDNLASSGNSLLS) the chain is on the cytoplasmic side. Residues 396 to 416 (MIMQLSMSIGVTIAGLLLGLF) form a helical membrane-spanning segment. The Periplasmic portion of the chain corresponds to 417 to 430 (GSQHVSVDSGTTQT). Residues 431-451 (VFMYTWLSMAFIIALPAFVFA) traverse the membrane as a helical segment. Residues 452–471 (RVPSDTHQNVAISRRKRSAQ) are Cytoplasmic-facing.

Belongs to the major facilitator superfamily. TCR/Tet family.

The protein resides in the cell inner membrane. The polypeptide is Putative multidrug resistance protein MdtD (Escherichia coli O45:K1 (strain S88 / ExPEC)).